The chain runs to 417 residues: Phosphoglycerate kinase 1 (417 aa).

N-acetylserine is present on S2. Phosphoserine occurs at positions 2 and 4. K6 is modified (N6-succinyllysine). K11 bears the N6-acetyllysine mark. (2R)-3-phosphoglycerate contacts are provided by V23, D24, F25, N26, Q38, and R39. Positions 38–43 are mitochondrial targeting region exposed following cis-trans isomerization by PIN1 and recognized by the TOM complex for mitochondrial translocation of the protein; it reads QRIKAA. Residue K48 is modified to N6-acetyllysine; alternate. N6-succinyllysine; alternate is present on K48. S62, H63, G65, and R66 together coordinate (2R)-3-phosphoglycerate. An N6-acetyllysine modification is found at K75. Y76 carries the post-translational modification Phosphotyrosine. N6-acetyllysine occurs at positions 86 and 91. K97 carries the post-translational modification N6-acetyllysine; alternate. K97 bears the N6-(2-hydroxyisobutyryl)lysine; alternate mark. Residues L122 and R123 each contribute to the (2R)-3-phosphoglycerate site. At K131 the chain carries N6-acetyllysine; alternate. K131 is modified (N6-malonyllysine; alternate). Position 146 is an N6-acetyllysine (K146). Residues H170 and R171 each coordinate (2R)-3-phosphoglycerate. K191 bears the N6-succinyllysine mark. A Phosphotyrosine modification is found at Y196. K199 carries the post-translational modification N6-acetyllysine. S203 bears the Phosphoserine mark. G214 provides a ligand contact to ADP. G214 is a binding site for CDP. Positions 215 and 216 each coordinate AMP. A215 contributes to the ATP binding site. A215 is a Mg(2+) binding site. K216 bears the N6-(2-hydroxyisobutyryl)lysine mark. Positions 218 and 219 each coordinate Mg(2+). D219 contributes to the CDP binding site. K220 lines the AMP pocket. Position 220 (K220) interacts with ATP. Residue K220 is modified to N6-(2-hydroxyisobutyryl)lysine. G238 is a binding site for ADP. Residue G238 coordinates CDP. Residue G239 coordinates AMP. Position 239 (G239) interacts with ATP. 2 positions are modified to N6-acetyllysine: K267 and K291. Residue G313 coordinates AMP. Position 313 (G313) interacts with ATP. N6-(2-hydroxyisobutyryl)lysine is present on K323. G338, V340, and F343 together coordinate CDP. Residue F343 participates in ADP binding. E344 lines the AMP pocket. E344 provides a ligand contact to ATP. K361 carries the post-translational modification N6-acetyllysine. ATP is bound by residues D375 and T376. D375 lines the Mg(2+) pocket.

The protein belongs to the phosphoglycerate kinase family. In terms of assembly, monomer. Interacts with kinase MAPK1/ERK2; the interaction is direct, occurs under hypoxic conditions, and promotes its interaction with PIN1. Interacts with peptidyl-prolyl cis-trans isomerase PIN1; the interaction is direct, occurs under hypoxic conditions, and targets the protein to the mitochondrion by promoting interactions with the TOM complex. Interacts with mitochondrial circRNA mcPGK1 (via its 2nd stem-loop); the interaction is direct and targets the protein to the mitochondrion by promoting interactions with the TOM complex. Interacts with pyruvate dehydrogenase kinase PDK1; the interaction is direct, occurs under hypoxic conditions and leads to PDK1-mediated inhibition of pyruvate dehydrogenase complex activity. Requires Mg(2+) as cofactor. Phosphorylated at Ser-203 by MAPK1/ERK2 under hypoxic conditions, which promotes its mitochondrial targeting.

Its subcellular location is the cytoplasm. It is found in the cytosol. The protein localises to the mitochondrion matrix. The catalysed reaction is (2R)-3-phosphoglycerate + ATP = (2R)-3-phospho-glyceroyl phosphate + ADP. It catalyses the reaction L-seryl-[protein] + ATP = O-phospho-L-seryl-[protein] + ADP + H(+). The protein operates within carbohydrate degradation; glycolysis; pyruvate from D-glyceraldehyde 3-phosphate: step 2/5. Its function is as follows. Catalyzes one of the two ATP producing reactions in the glycolytic pathway via the reversible conversion of 1,3-diphosphoglycerate to 3-phosphoglycerate. Both L- and D- forms of purine and pyrimidine nucleotides can be used as substrates, but the activity is much lower on pyrimidines. In addition to its role as a glycolytic enzyme, it seems that PGK-1 acts as a polymerase alpha cofactor protein (primer recognition protein). Acts as a protein kinase when localized to the mitochondrion where it phosphorylates pyruvate dehydrogenase kinase PDK1 to inhibit pyruvate dehydrogenase complex activity and suppress the formation of acetyl-coenzyme A from pyruvate, and consequently inhibit oxidative phosphorylation and promote glycolysis. May play a role in sperm motility. The protein is Phosphoglycerate kinase 1 (PGK1) of Macaca fascicularis (Crab-eating macaque).